The primary structure comprises 61 residues: Small ribosomal subunit protein uS14 (61 aa).

Positions 24, 27, 40, and 43 each coordinate Zn(2+).

Belongs to the universal ribosomal protein uS14 family. Zinc-binding uS14 subfamily. As to quaternary structure, part of the 30S ribosomal subunit. Contacts proteins S3 and S10. It depends on Zn(2+) as a cofactor.

Its function is as follows. Binds 16S rRNA, required for the assembly of 30S particles and may also be responsible for determining the conformation of the 16S rRNA at the A site. In Acidothermus cellulolyticus (strain ATCC 43068 / DSM 8971 / 11B), this protein is Small ribosomal subunit protein uS14.